Consider the following 65-residue polypeptide: Hainantoxin-X.3 (65 aa).

A signal peptide spans Met1–Ala20. A propeptide spanning residues Glu21–Arg37 is cleaved from the precursor. Disulfide bonds link Cys39–Cys56, Cys46–Cys59, and Cys55–Cys64.

It belongs to the neurotoxin 36 family. 02 subfamily. Expressed by the venom gland.

The protein resides in the secreted. Reversibly blocks N-type calcium channels (Cav2.2/CACNA1B) in rat dorsal root ganglion cells. Elicits no toxic symptoms in either vertebrates or invertebrates during a period of 48 hours post-injection, when it was assayed in vivo by direct injection into mice and cockroaches. The protein is Hainantoxin-X.3 of Cyriopagopus hainanus (Chinese bird spider).